A 226-amino-acid polypeptide reads, in one-letter code: ATP synthase subunit C lysine N-methyltransferase (226 aa).

A helical membrane pass occupies residues 35–55 (VIGGTLVALYAVATPFVAPAL). The segment at 48 to 82 (TPFVAPALRKLCLPYVPATTTQVKNVLKMLRSRTG) is required for mitochondrial location.

Belongs to the ANT/ATPSC lysine N-methyltransferase family.

It localises to the mitochondrion membrane. In terms of biological role, mitochondrial protein-lysine N-methyltransferase that promotes chronic pain. Involved in persistent inflammatory and neuropathic pain: methyltransferase activity in the mitochondria of sensory neurons promotes chronic pain via a pathway that depends on the production of reactive oxygen species (ROS) and on the engagement of spinal cord microglia. Protein-lysine N-methyltransferase activity is dependent on S-adenosyl-L-methionine. This chain is ATP synthase subunit C lysine N-methyltransferase (atpsckmt), found in Xenopus laevis (African clawed frog).